Consider the following 404-residue polypeptide: Formate-dependent phosphoribosylglycinamide formyltransferase (404 aa).

N(1)-(5-phospho-beta-D-ribosyl)glycinamide is bound by residues 25 to 26 (EL) and glutamate 85. ATP-binding positions include arginine 118, lysine 159, 164–169 (SSGKGQ), 199–202 (EGFV), and glutamate 207. Residues 123–318 (RLAAEELGLP…EFELHARAIL (196 aa)) form the ATP-grasp domain. Mg(2+)-binding residues include glutamate 277 and glutamate 289. N(1)-(5-phospho-beta-D-ribosyl)glycinamide-binding positions include aspartate 296, lysine 365, and 372-373 (RR).

It belongs to the PurK/PurT family. In terms of assembly, homodimer.

The catalysed reaction is N(1)-(5-phospho-beta-D-ribosyl)glycinamide + formate + ATP = N(2)-formyl-N(1)-(5-phospho-beta-D-ribosyl)glycinamide + ADP + phosphate + H(+). It participates in purine metabolism; IMP biosynthesis via de novo pathway; N(2)-formyl-N(1)-(5-phospho-D-ribosyl)glycinamide from N(1)-(5-phospho-D-ribosyl)glycinamide (formate route): step 1/1. Its function is as follows. Involved in the de novo purine biosynthesis. Catalyzes the transfer of formate to 5-phospho-ribosyl-glycinamide (GAR), producing 5-phospho-ribosyl-N-formylglycinamide (FGAR). Formate is provided by PurU via hydrolysis of 10-formyl-tetrahydrofolate. The chain is Formate-dependent phosphoribosylglycinamide formyltransferase from Burkholderia cenocepacia (strain HI2424).